Consider the following 486-residue polypeptide: Palmitoyltransferase pfa5 (486 aa).

Transmembrane regions (helical) follow at residues 12–32 and 54–74; these read AVARVIPVVLFGIIIYSCYVI and VGAGAAILVVFYILLLFVIIT. A disordered region spans residues 94–130; the sequence is AADQQSTPAKRSKSRSRRKGHGHGHRKSKSDEVSDKP. Residues 103-121 show a composition bias toward basic residues; the sequence is KRSKSRSRRKGHGHGHRKS. The DHHC domain maps to 172–222; that stretch reads IYCSKCCHYKPDRTHHCREVDRCVRKMDHFCPWVGGVVSETSFKFFIQFVF. 2 helical membrane-spanning segments follow: residues 217–237 and 261–281; these read FIQFVFYTALFCMTVLIVCAI and LVMLTLIGLSDSLQLAAFNLT. Disordered stretches follow at residues 326 to 357 and 433 to 486; these read PVPPPLSGMPTQPATGEGDNPYSPPPVPSTDP and KDAA…TGTT. The segment covering 447-456 has biased composition (low complexity); sequence SSYNSSPSAP. The span at 460–480 shows a compositional bias: basic residues; that stretch reads RSKRKQKRGKHHHHHHHHRHS.

This sequence belongs to the DHHC palmitoyltransferase family. PFA5 subfamily. Post-translationally, autopalmitoylated.

The protein resides in the membrane. The catalysed reaction is L-cysteinyl-[protein] + hexadecanoyl-CoA = S-hexadecanoyl-L-cysteinyl-[protein] + CoA. The polypeptide is Palmitoyltransferase pfa5 (pfa5) (Emericella nidulans (strain FGSC A4 / ATCC 38163 / CBS 112.46 / NRRL 194 / M139) (Aspergillus nidulans)).